The primary structure comprises 417 residues: D-amino acid dehydrogenase (417 aa).

Residue 3–17 (VIVIGSGVIGLTSAW) coordinates FAD.

It belongs to the DadA oxidoreductase family. FAD is required as a cofactor.

The catalysed reaction is a D-alpha-amino acid + A + H2O = a 2-oxocarboxylate + AH2 + NH4(+). It participates in amino-acid degradation; D-alanine degradation; NH(3) and pyruvate from D-alanine: step 1/1. Oxidative deamination of D-amino acids. The chain is D-amino acid dehydrogenase from Vibrio atlanticus (strain LGP32) (Vibrio splendidus (strain Mel32)).